The primary structure comprises 380 residues: Cytochrome b (380 aa).

Helical transmembrane passes span Ser-33–Met-53, Trp-77–Val-98, Trp-113–Leu-133, and Phe-178–Leu-198. Heme b contacts are provided by His-83 and His-97. The heme b site is built by His-182 and His-196. A ubiquinone is bound at residue His-201. 4 helical membrane passes run Tyr-226–Ser-246, Leu-288–His-308, Leu-320–Gly-340, and Phe-347–Pro-367.

Belongs to the cytochrome b family. As to quaternary structure, the cytochrome bc1 complex contains 3 respiratory subunits (MT-CYB, CYC1 and UQCRFS1), 2 core proteins (UQCRC1 and UQCRC2) and probably 6 low-molecular weight proteins. Heme b serves as cofactor.

The protein localises to the mitochondrion inner membrane. Component of the ubiquinol-cytochrome c reductase complex (complex III or cytochrome b-c1 complex) that is part of the mitochondrial respiratory chain. The b-c1 complex mediates electron transfer from ubiquinol to cytochrome c. Contributes to the generation of a proton gradient across the mitochondrial membrane that is then used for ATP synthesis. The sequence is that of Cytochrome b (mt-cyb) from Polyodon spathula (North American paddlefish).